We begin with the raw amino-acid sequence, 652 residues long: Coiled-coil domain-containing protein 81 (652 aa).

Phosphoserine is present on Ser206. Over residues 238 to 256 (KCKLKDQSDKEEGTRDISS) the composition is skewed to basic and acidic residues. Positions 238–258 (KCKLKDQSDKEEGTRDISSPK) are disordered. Ser275, Ser296, and Ser417 each carry phosphoserine. Positions 436–493 (MDNRQENEIKQRQYRELMDRLEQVQLTEELAAQRAKFLKDKMEETQCYKRALDAQIKN) form a coiled coil.

It localises to the cytoplasm. Its subcellular location is the cytoskeleton. The protein resides in the microtubule organizing center. It is found in the centrosome. The polypeptide is Coiled-coil domain-containing protein 81 (CCDC81) (Homo sapiens (Human)).